The primary structure comprises 283 residues: Putative UTP--glucose-1-phosphate uridylyltransferase (283 aa).

This sequence belongs to the UDPGP type 2 family.

It catalyses the reaction alpha-D-glucose 1-phosphate + UTP + H(+) = UDP-alpha-D-glucose + diphosphate. The chain is Putative UTP--glucose-1-phosphate uridylyltransferase from Methanocaldococcus jannaschii (strain ATCC 43067 / DSM 2661 / JAL-1 / JCM 10045 / NBRC 100440) (Methanococcus jannaschii).